The following is a 367-amino-acid chain: Serine/threonine-protein kinase Sgk2 (367 aa).

A disordered region spans residues 1–28 (MASSPVGVPSPQPSRANGNINLGPSANP). Phosphoserine is present on Ser10. The span at 15-28 (RANGNINLGPSANP) shows a compositional bias: polar residues. In terms of domain architecture, Protein kinase spans 35 to 292 (FDFLKVIGKG…FLDIKNHMFF (258 aa)). Residues 41 to 49 (IGKGNYGKV) and Lys64 each bind ATP. The Nuclear localization signal motif lies at 68 to 77 (KKSILKNKEQ). Asp159 acts as the Proton acceptor in catalysis. Phosphothreonine; by PDPK1 is present on Thr193. Positions 293-367 (SPINWDDLYH…AQDDDDILDS (75 aa)) constitute an AGC-kinase C-terminal domain. Residues Ser334 and Ser356 each carry the phosphoserine modification. A Phosphotyrosine modification is found at Tyr357.

It belongs to the protein kinase superfamily. AGC Ser/Thr protein kinase family. Post-translationally, activated by phosphorylation on Ser-356 by an unknown kinase (may be mTORC2 but not confirmed), transforming it into a substrate for PDPK1 which then phosphorylates it on Thr-193. In terms of tissue distribution, expressed in the proximal tubule and thick ascending limb of the loop of Henle (TALH).

Its subcellular location is the cytoplasm. The protein localises to the nucleus. It carries out the reaction L-seryl-[protein] + ATP = O-phospho-L-seryl-[protein] + ADP + H(+). It catalyses the reaction L-threonyl-[protein] + ATP = O-phospho-L-threonyl-[protein] + ADP + H(+). With respect to regulation, two specific sites, one in the kinase domain (Thr-193) and the other in the C-terminal regulatory region (Ser-356), need to be phosphorylated for its full activation. In terms of biological role, serine/threonine-protein kinase which is involved in the regulation of a wide variety of ion channels, membrane transporters, cell growth, survival and proliferation. Up-regulates Na(+) channels: SCNN1A/ENAC, K(+) channels: KCNA3/Kv1.3, KCNE1 and KCNQ1, amino acid transporter: SLC6A19, glutamate transporter: SLC1A6/EAAT4, glutamate receptors: GRIA1/GLUR1 and GRIK2/GLUR6, Na(+)/H(+) exchanger: SLC9A3/NHE3, and the Na(+)/K(+) ATPase. The sequence is that of Serine/threonine-protein kinase Sgk2 (Sgk2) from Rattus norvegicus (Rat).